A 2094-amino-acid chain; its full sequence is Nuclear mitotic apparatus protein 1 (2094 aa).

A head (Globular) region spans residues 1 to 210 (MTLHATRAAT…SPMGDILQTP (210 aa)). Ser160 carries the post-translational modification Phosphoserine. Thr161 carries the phosphothreonine modification. Phosphoserine is present on residues Ser167 and Ser201. Residue Thr209 is modified to Phosphothreonine. A coiled-coil region spans residues 211-1681 (QFQMRRLKKQ…ADQQLRDLGK (1471 aa)). Phosphoserine is present on Ser269. Lys377 carries the N6-acetyllysine modification. A phosphoserine mark is found at Ser386 and Ser398. Residue Lys443 is modified to N6-acetyllysine. 2 disordered regions span residues 617-636 (QLQA…TQAQ) and 723-759 (LKEQ…AGRK). The span at 627 to 636 (NAQTSVTQAQ) shows a compositional bias: polar residues. Residue Lys878 is modified to N6-acetyllysine. Disordered regions lie at residues 921-1000 (SLEL…TQER), 1081-1143 (LVKK…EGLT), and 1173-1223 (ELGH…SSLI). Residues 935 to 951 (ASDQLGEQQGRPFSSTH) show a composition bias toward polar residues. 2 stretches are compositionally biased toward basic and acidic residues: residues 956-972 (AMER…ERLR) and 983-998 (QEER…RLTQ). A Phosphoserine modification is found at Ser1183. A compositionally biased stretch (basic and acidic residues) spans 1194 to 1206 (KAQDHSKAEEEWK). At Ser1221 the chain carries Phosphoserine. Position 1507 is an N6-acetyllysine (Lys1507). Position 1583 is a phosphoserine (Ser1583). Residue Lys1681 forms a Glycyl lysine isopeptide (Lys-Gly) (interchain with G-Cter in SUMO2) linkage. Positions 1681–1858 (KFQVATDALK…NSALLSLPGY (178 aa)) are membrane-binding domain 1. The tract at residues 1682 to 2094 (FQVATDALKS…TPRAKGKVKH (413 aa)) is tail (Globular). Ser1703, Ser1706, and Ser1710 each carry phosphoserine. A disordered region spans residues 1718–1743 (SVASKLPRTQPDGTSVPGEPASPISQ). A Tankyrase-binding domain motif is present at residues 1724–1730 (PRTQPDG). Ser1739 and Ser1742 each carry phosphoserine. Lys1748 is covalently cross-linked (Glycyl lysine isopeptide (Lys-Gly) (interchain with G-Cter in SUMO1); alternate). Lys1748 is covalently cross-linked (Glycyl lysine isopeptide (Lys-Gly) (interchain with G-Cter in SUMO2); alternate). Residue Ser1751 is modified to Phosphoserine. Ser1754 is modified (phosphoserine; by PLK1). Position 1756 is a phosphotyrosine (Tyr1756). A Phosphothreonine modification is found at Thr1758. The interval 1760 to 1795 (TPARGQAPLETSLDSLGDAFPDSGRKTRSARRRTTQ) is disordered. The tract at residues 1770–1792 (TSLDSLGDAFPDSGRKTRSARRR) is 4.1-binding domain. Ser1771 bears the Phosphoserine; by PLK1 mark. A phosphoserine mark is found at Ser1774 and Ser1782. Residue Thr1786 is modified to Phosphothreonine. Lys1804 participates in a covalent cross-link: Glycyl lysine isopeptide (Lys-Gly) (interchain with G-Cter in SUMO2). 2 disordered regions span residues 1807–1883 (LEEP…GRNS) and 1937–2094 (EMKT…KVKH). Residues Ser1812 and Ser1815 each carry the phosphoserine modification. Polar residues predominate over residues 1812 to 1839 (SANSSFYSTQSAPASQANLRATSSTQSL). Position 1816 is a phosphoserine; by PLK1 (Ser1816). Tyr1818 bears the Phosphotyrosine mark. The residue at position 1822 (Ser1822) is a Phosphoserine. Phosphoserine; alternate is present on Ser1826. Residue Ser1826 is glycosylated (O-linked (GlcNAc) serine; alternate). A phosphoserine mark is found at Ser1844 and Ser1869. Residues 1864-1967 (SSARRSQARM…AEGVGITTRQ (104 aa)) form a tubulin-binding domain region. Residues 1874-1908 (SSGAPQGRNSFYMGTCQDEPEQLDDWNRIAELQQR) are GPSM2-binding domain. Residues 1937 to 1948 (EMKTGDPRETLR) are compositionally biased toward basic and acidic residues. Position 1951 is a phosphoserine (Ser1951). A membrane-binding domain 2 region spans residues 1963–2042 (ITTRQQRKRV…SILNTPKKLG (80 aa)). The short motif at 1966-1971 (RQQRKR) is the Nuclear localization signal element. Phosphoserine occurs at positions 1973 and 1974. Phosphothreonine is present on Thr1982. At Ser1985 the chain carries Phosphoserine. Thr1997 carries the phosphothreonine; by CDK1 modification. Positions 1997–2006 (TPRDRHEGRK) are enriched in basic and acidic residues. Ser2029 carries the post-translational modification Phosphoserine. Thr2037 bears the Phosphothreonine mark. 2 positions are modified to phosphoserine: Ser2044 and Ser2059. Ser2069 carries the phosphoserine; by CDK1 modification. Over residues 2073-2085 (ATTTTGTATVATT) the composition is skewed to low complexity. Residue Thr2085 is modified to Phosphothreonine; by CDK1.

In terms of assembly, homodimer. Also forms multiarm oligomers by association of C-terminal tail domains, oligomers may further assemble to form a hexagonal nuclear lattice-like network. Associates with the dynein-dynactin complex; this association promotes the transport and accumulation of NUMA1 at the mitotic spindle poles that is inhibited by the BRISC complex in a PLK1-dependent manner. Part of a spindle orientation complex at least composed of GNAI1, GPSM2 and NUMA1. Interacts (via C-terminus) with microtubules (MTs); this interaction is direct and promotes both MT bundle formation and stability in a dynein-dynactin complex- and CDK1-independent manner. Interacts with EPB41 and EPB41L2; these interactions are negatively regulated by CDK1 during metaphase and are important for anaphase-specific localization of NUMA1 in symmetrically dividing cells. Interacts (via C-terminus) with GPSM2 (via TPR repeats); this interaction is direct, prevented by competitive binding of INSC, is inhibited in a PLK1-dependent manner, blocks the association of NUMA1 with MTs and inhibits NUMA1-induced MT bundle formation, prevents the association of NUMA1 with SPAG5, induces mitotic spindle pole localization of GPSM2, both metaphase cell cortex localization of NUMA1 and mitotic spindle organization. Does not interact with GPSM2 during anaphase. Interacts (via C-terminus) with the nuclear importin alpha/importin beta receptor; this interaction is inhibited by RanGTP. Interacts (via C-terminus) with KPNB1; this interaction is inhibited by RanGTP and the BRISC complex. Interacts with ABRAXAS2 and the BRISC complex; these interactions regulate mitotic spindle assembly. Interacts (via N-terminal end of the coiled-coil domain) with RAE1; this interaction promotes mitotic spindle formation. Interacts (via C-terminus) with SPAG5 (via C-terminus); this interaction promotes the recruitment of SPAG5 to the MTs at spindle poles in a dynein-dynactin-dependent manner and regulates mitotic spindle organization and proper chromosome alignment during mitosis. Interacts with TNKS; this interaction occurs at the onset of mitosis. Interacts with TNKS2. Interacts with tubulin. Interacts with KHDC3 (via C-terminus). Post-translationally, phosphorylation and dephosphorylation on Thr-2037 regulates the extent of cortical NUMA1 and the dynein-dynactin complex localization during mitotic metaphase and anaphase. In metaphase, phosphorylation on Thr-2037 occurs in a kinase CDK1-dependent manner; this phosphorylation maintains low levels of cortical dynein-dynactin complex at metaphase, and hence proper spindle positioning. In anaphase, dephosphorylated on Thr-2037 by phosphatase PPP2CA; this dephosphorylation stimulates its membrane association and with the dynein-dynactin complex its enrichment at the cell cortex, and hence robust spindle elongation. Probably also phosphorylated on Thr-1997 and Ser-2069 by CDK1; these phosphorylations may regulate its cell cortex recruitment during metaphase and anaphase. Phosphorylated on Ser-1751, Ser-1754, Ser-1771 and Ser-1816 by PLK1; these phosphorylations induce cortical dynein-dynactin complex dissociation from the NUMA1-GPSM2 complex and negatively regulates cortical dynein-dynactin complex localization. In terms of processing, ADP-ribosylated by TNKS at the onset of mitosis; ADP-ribosylation is not required for its localization to spindle poles. O-glycosylated during cytokinesis at sites identical or close to phosphorylation sites, this interferes with the phosphorylation status. Post-translationally, ubiquitinated with 'Lys-63'-linked polyubiquitin chains. Deubiquitination by the BRISC complex is important for the incorporation of NUMA1 into mitotic spindle poles and normal spindle pole function, probably by modulating interactions between NUMA1, dynein-dynactin complex and importin-beta. Expressed in testis, speen, liver, lung, spinal cord and brain. Expressed in Purkinje neurons (at protein level).

It is found in the nucleus. The protein localises to the nucleoplasm. It localises to the nucleus matrix. The protein resides in the chromosome. Its subcellular location is the cytoplasm. It is found in the cytoskeleton. The protein localises to the microtubule organizing center. It localises to the centrosome. The protein resides in the spindle pole. Its subcellular location is the cell cortex. It is found in the cell membrane. The protein localises to the lateral cell membrane. Microtubule (MT)-binding protein that plays a role in the formation and maintenance of the spindle poles and the alignement and the segregation of chromosomes during mitotic cell division. Functions to tether the minus ends of MTs at the spindle poles, which is critical for the establishment and maintenance of the spindle poles. Plays a role in the establishment of the mitotic spindle orientation during metaphase and elongation during anaphase in a dynein-dynactin-dependent manner. In metaphase, part of a ternary complex composed of GPSM2 and G(i) alpha proteins, that regulates the recruitment and anchorage of the dynein-dynactin complex in the mitotic cell cortex regions situated above the two spindle poles, and hence regulates the correct oritentation of the mitotic spindle. During anaphase, mediates the recruitment and accumulation of the dynein-dynactin complex at the cell membrane of the polar cortical region through direct association with phosphatidylinositol 4,5-bisphosphate (PI(4,5)P2), and hence participates in the regulation of the spindle elongation and chromosome segregation. Also binds to other polyanionic phosphoinositides, such as phosphatidylinositol 3-phosphate (PIP), lysophosphatidic acid (LPA) and phosphatidylinositol triphosphate (PIP3), in vitro. Also required for proper orientation of the mitotic spindle during asymmetric cell divisions. Plays a role in mitotic MT aster assembly. Involved in anastral spindle assembly. Positively regulates TNKS protein localization to spindle poles in mitosis. Highly abundant component of the nuclear matrix where it may serve a non-mitotic structural role, occupies the majority of the nuclear volume. Required for epidermal differentiation and hair follicle morphogenesis. The chain is Nuclear mitotic apparatus protein 1 from Mus musculus (Mouse).